Consider the following 278-residue polypeptide: HTH-type transcriptional activator RhaS (278 aa).

One can recognise an HTH araC/xylS-type domain in the interval 174–272 (NLLLAWLEDH…NWSPRDIRQG (99 aa)). 2 DNA-binding regions (H-T-H motif) span residues 191–212 (DAVA…KQQT) and 239–262 (VTDI…RREF).

In terms of assembly, binds DNA as a dimer.

The protein localises to the cytoplasm. Activates expression of the rhaBAD and rhaT operons. This is HTH-type transcriptional activator RhaS from Escherichia coli O127:H6 (strain E2348/69 / EPEC).